The following is a 503-amino-acid chain: Sugar phosphate exchanger 3 (503 aa).

Residues 20-40 (YTHHHLAAFLLTFFSYSLLHA) traverse the membrane as a helical segment. Asn-62 and Asn-71 each carry an N-linked (GlcNAc...) asparagine glycan. Transmembrane regions (helical) follow at residues 87–107 (TLFLGLLDTIFLFAYAVGLFI), 119–139 (LVLTFGMCSSAITMFVFGTLT), 152–172 (LVWIVNGLLQSTGWPCVVAIM), 183–203 (FVFGLWSACASVGNILGAFLA), and 214–234 (AFLVTASVQFAGGIIIFFGLV). The N-linked (GlcNAc...) asparagine glycan is linked to Asn-275. Transmembrane regions (helical) follow at residues 300-322 (GVLLYSLAYACLKLVNYSFFFWL), 342-362 (IWYDIGGIVGGTVQGLISDLM), 367-387 (PVLTVSLLLAVGALFGYSHSP), 395-415 (FIMSITGFFIGGPSNMISSAI), 437-457 (GIVDGTGSIGAAMGQFLVPLI), and 466-486 (VFYFFIFMICMTTVFMVPLIV).

This sequence belongs to the major facilitator superfamily. Organophosphate:Pi antiporter (OPA) (TC 2.A.1.4) family.

The protein localises to the endoplasmic reticulum membrane. The protein resides in the lysosome membrane. In terms of biological role, unlike the other SLC37 members, seems to lack glucose-6-phosphate antiporter activity. This is Sugar phosphate exchanger 3 (slc37a3) from Xenopus laevis (African clawed frog).